Consider the following 301-residue polypeptide: Homoserine O-acetyltransferase (301 aa).

Residue cysteine 142 is the Acyl-thioester intermediate of the active site. Substrate contacts are provided by lysine 163 and serine 192. The active-site Proton acceptor is histidine 235. The active site involves glutamate 237. Residue arginine 249 participates in substrate binding.

The protein belongs to the MetA family.

It localises to the cytoplasm. The enzyme catalyses L-homoserine + acetyl-CoA = O-acetyl-L-homoserine + CoA. The protein operates within amino-acid biosynthesis; L-methionine biosynthesis via de novo pathway; O-acetyl-L-homoserine from L-homoserine: step 1/1. In terms of biological role, transfers an acetyl group from acetyl-CoA to L-homoserine, forming acetyl-L-homoserine. This chain is Homoserine O-acetyltransferase, found in Bacillus subtilis (strain 168).